We begin with the raw amino-acid sequence, 88 residues long: Prolevitide (88 aa).

The first 20 residues, 1 to 20 (MYKGIFLCVLFAVICANSLA), serve as a signal peptide directing secretion. Position 74 is a pyrrolidone carboxylic acid (Gln74). At Gln87 the chain carries Glutamine amide.

It belongs to the gastrin/cholecystokinin family. As to expression, expressed by the skin glands.

Its subcellular location is the secreted. In Xenopus laevis (African clawed frog), this protein is Prolevitide.